The sequence spans 381 residues: Probable tRNA sulfurtransferase (381 aa).

Residues 57–160 (EKGIEKLKSV…NKAYVYSKKI (104 aa)) enclose the THUMP domain. ATP is bound by residues 177–178 (ML), 202–203 (YF), R259, G281, and Q290.

The protein belongs to the ThiI family.

The protein localises to the cytoplasm. The catalysed reaction is [ThiI sulfur-carrier protein]-S-sulfanyl-L-cysteine + a uridine in tRNA + 2 reduced [2Fe-2S]-[ferredoxin] + ATP + H(+) = [ThiI sulfur-carrier protein]-L-cysteine + a 4-thiouridine in tRNA + 2 oxidized [2Fe-2S]-[ferredoxin] + AMP + diphosphate. It carries out the reaction [ThiS sulfur-carrier protein]-C-terminal Gly-Gly-AMP + S-sulfanyl-L-cysteinyl-[cysteine desulfurase] + AH2 = [ThiS sulfur-carrier protein]-C-terminal-Gly-aminoethanethioate + L-cysteinyl-[cysteine desulfurase] + A + AMP + 2 H(+). It functions in the pathway cofactor biosynthesis; thiamine diphosphate biosynthesis. Catalyzes the ATP-dependent transfer of a sulfur to tRNA to produce 4-thiouridine in position 8 of tRNAs, which functions as a near-UV photosensor. Also catalyzes the transfer of sulfur to the sulfur carrier protein ThiS, forming ThiS-thiocarboxylate. This is a step in the synthesis of thiazole, in the thiamine biosynthesis pathway. The sulfur is donated as persulfide by IscS. This Clostridium kluyveri (strain NBRC 12016) protein is Probable tRNA sulfurtransferase.